The chain runs to 296 residues: Tubulin polyglutamylase complex subunit 2 (296 aa).

Residues 257 to 296 form a disordered region; the sequence is KILIPKKKGPVQPVSGQKGPGPLAPPTSKPSAGCGNPVRK.

Part of the neuronal tubulin polyglutamylase complex which contains TPGS1, TPGS2, TTLL1, LRRC49 and NICN1. Interacts with CSTPP1 and LRRC49.

It localises to the cytoplasm. Its subcellular location is the cytoskeleton. The protein resides in the microtubule organizing center. The protein localises to the centrosome. It is found in the centriolar satellite. Functionally, subunit of the tubulin polyglutamylase complex (TPGC). The complex mediates cilia and flagella polyglutamylation which is essential for their biogenesis and motility. This Rattus norvegicus (Rat) protein is Tubulin polyglutamylase complex subunit 2 (Tpgs2).